Here is a 181-residue protein sequence, read N- to C-terminus: Inner membrane-spanning protein YciB (181 aa).

5 helical membrane passes run 10–30 (LIIF…GALI), 50–70 (MHLI…VFHD), 72–92 (AFIK…LGVS), 118–138 (VTWY…YVAF), and 148–168 (FKVF…VFYL).

Belongs to the YciB family.

It localises to the cell inner membrane. Its function is as follows. Plays a role in cell envelope biogenesis, maintenance of cell envelope integrity and membrane homeostasis. This Shewanella sp. (strain MR-7) protein is Inner membrane-spanning protein YciB.